Reading from the N-terminus, the 90-residue chain is Probable Fe(2+)-trafficking protein (90 aa).

It belongs to the Fe(2+)-trafficking protein family.

Its function is as follows. Could be a mediator in iron transactions between iron acquisition and iron-requiring processes, such as synthesis and/or repair of Fe-S clusters in biosynthetic enzymes. The chain is Probable Fe(2+)-trafficking protein from Variovorax paradoxus (strain S110).